Consider the following 220-residue polypeptide: MSAIPVIAIDGPTASGKGTVASLVAEKLGFHYLDSGALYRLVALASEKHGIDVKNGPELGLLVPKLLISFKNSQIFLDDDEVTDAIRTESIGLRASALAVHPEVRSALVGLQRSFRQFPGLVADGRDMASVIFPDAVLKVFLTATAAARAERRYKQLIAKGISAKLSDLLQDLQERDARDSSRGTAPLLVADGAKVLETSDLSIDQAVKTVLDWYQSAIA.

Residue 11–19 participates in ATP binding; that stretch reads GPTASGKGT.

Belongs to the cytidylate kinase family. Type 1 subfamily.

The protein resides in the cytoplasm. The enzyme catalyses CMP + ATP = CDP + ADP. The catalysed reaction is dCMP + ATP = dCDP + ADP. The polypeptide is Cytidylate kinase (Polynucleobacter asymbioticus (strain DSM 18221 / CIP 109841 / QLW-P1DMWA-1) (Polynucleobacter necessarius subsp. asymbioticus)).